The chain runs to 259 residues: Ribosome maturation factor RimP (259 aa).

Positions 186-195 are enriched in basic and acidic residues; sequence RGKQAERELK. Residues 186–259 are disordered; the sequence is RGKQAERELK…RGDTDLSEGD (74 aa). The span at 239 to 248 shows a compositional bias: basic residues; sequence KQHRLAAGRS.

Belongs to the RimP family.

It localises to the cytoplasm. Functionally, required for maturation of 30S ribosomal subunits. The protein is Ribosome maturation factor RimP of Rhodopseudomonas palustris (strain HaA2).